Consider the following 212-residue polypeptide: Methylthioribulose-1-phosphate dehydratase (212 aa).

Residues H99 and H101 each contribute to the Zn(2+) site.

The protein belongs to the aldolase class II family. MtnB subfamily. In terms of assembly, homotetramer. Zn(2+) is required as a cofactor.

The catalysed reaction is 5-(methylsulfanyl)-D-ribulose 1-phosphate = 5-methylsulfanyl-2,3-dioxopentyl phosphate + H2O. The protein operates within amino-acid biosynthesis; L-methionine biosynthesis via salvage pathway; L-methionine from S-methyl-5-thio-alpha-D-ribose 1-phosphate: step 2/6. Functionally, catalyzes the dehydration of methylthioribulose-1-phosphate (MTRu-1-P) into 2,3-diketo-5-methylthiopentyl-1-phosphate (DK-MTP-1-P). The polypeptide is Methylthioribulose-1-phosphate dehydratase (Bacillus pumilus (strain SAFR-032)).